An 88-amino-acid chain; its full sequence is Small ribosomal subunit protein uS15c (88 aa).

The protein belongs to the universal ribosomal protein uS15 family. In terms of assembly, part of the 30S ribosomal subunit.

It localises to the plastid. The protein localises to the chloroplast. This is Small ribosomal subunit protein uS15c (rps15) from Arabis hirsuta (Hairy rock-cress).